A 462-amino-acid polypeptide reads, in one-letter code: Ubiquitin carboxyl-terminal hydrolase calypso (462 aa).

A UCH catalytic domain is found at 29 to 260 (GWLELESDPG…IRFNLMAVVP (232 aa)). Residue C115 is the Nucleophile of the active site. Catalysis depends on H197, which acts as the Proton donor. One can recognise a ULD domain in the interval 357–385 (NYDKFICTFLSMLAHQGVLGELVSQHLLP). Positions 387–462 (KKIANRLNRQ…KGRNKCRKRK (76 aa)) are positively charged C-terminal tail required for binding nucleosomes. Low complexity predominate over residues 413-447 (GTNAAGSKSQQQQQQTQQQPQQTQTAKNGKSPGKT). Residues 413 to 462 (GTNAAGSKSQQQQQQTQQQPQQTQTAKNGKSPGKTPGRRRKGRNKCRKRK) are disordered. The span at 448-462 (PGRRRKGRNKCRKRK) shows a compositional bias: basic residues.

Belongs to the peptidase C12 family. BAP1 subfamily. As to quaternary structure, catalytic component of the polycomb repressive deubiquitinase (PR-DUB) complex, at least composed of caly/calypso, Asx and sba (MBD5/6 homolog). The PR-DUB complex associates with nucleosomes to mediate deubiquitination of histone H2AK118ub1 substrates; the association requires the positively charged C-terminal tail of caly, probably due to direct binding of DNA. Interacts (via ULD domain) with Asx (via DEUBAD domain); the interaction produces a stable heterodimer with a composite binding site for ubiquitin. Homodimerizes (via coiled-coil hinge-region between the UCH and ULD domains) to mediate assembly of 2 copies of the caly-Asx heterodimer into a bisymmetric tetramer; dimerization enhances PR-DUB association with nucleosomes.

It is found in the nucleus. It catalyses the reaction Thiol-dependent hydrolysis of ester, thioester, amide, peptide and isopeptide bonds formed by the C-terminal Gly of ubiquitin (a 76-residue protein attached to proteins as an intracellular targeting signal).. Catalytic component of the polycomb repressive deubiquitinase (PR-DUB) complex, a complex that specifically mediates deubiquitination of histone H2A monoubiquitinated at 'Lys-119' (H2AK118ub1). Mediates bisymmetric organization of the PR-DUB complex and is involved in association with nucleosomes to mediate deubiquitination. Does not deubiquitinate monoubiquitinated histone H2B. Required to maintain the transcriptionally repressive state of homeotic genes throughout development. The PR-DUB complex has weak or no activity toward 'Lys-48'- and 'Lys-63'-linked polyubiquitin chains. Polycomb group (PcG) protein. This Drosophila grimshawi (Hawaiian fruit fly) protein is Ubiquitin carboxyl-terminal hydrolase calypso.